Here is a 190-residue protein sequence, read N- to C-terminus: Crossover junction endodeoxyribonuclease RuvC (190 aa).

Residues D8, E67, and D139 contribute to the active site. D8, E67, and D139 together coordinate Mg(2+).

The protein belongs to the RuvC family. As to quaternary structure, homodimer which binds Holliday junction (HJ) DNA. The HJ becomes 2-fold symmetrical on binding to RuvC with unstacked arms; it has a different conformation from HJ DNA in complex with RuvA. In the full resolvosome a probable DNA-RuvA(4)-RuvB(12)-RuvC(2) complex forms which resolves the HJ. Mg(2+) is required as a cofactor.

The protein localises to the cytoplasm. It catalyses the reaction Endonucleolytic cleavage at a junction such as a reciprocal single-stranded crossover between two homologous DNA duplexes (Holliday junction).. In terms of biological role, the RuvA-RuvB-RuvC complex processes Holliday junction (HJ) DNA during genetic recombination and DNA repair. Endonuclease that resolves HJ intermediates. Cleaves cruciform DNA by making single-stranded nicks across the HJ at symmetrical positions within the homologous arms, yielding a 5'-phosphate and a 3'-hydroxyl group; requires a central core of homology in the junction. The consensus cleavage sequence is 5'-(A/T)TT(C/G)-3'. Cleavage occurs on the 3'-side of the TT dinucleotide at the point of strand exchange. HJ branch migration catalyzed by RuvA-RuvB allows RuvC to scan DNA until it finds its consensus sequence, where it cleaves and resolves the cruciform DNA. This is Crossover junction endodeoxyribonuclease RuvC from Haemophilus influenzae (strain ATCC 51907 / DSM 11121 / KW20 / Rd).